A 229-amino-acid chain; its full sequence is Urease accessory protein UreF (229 aa).

This sequence belongs to the UreF family. As to quaternary structure, ureD, UreF and UreG form a complex that acts as a GTP-hydrolysis-dependent molecular chaperone, activating the urease apoprotein by helping to assemble the nickel containing metallocenter of UreC. The UreE protein probably delivers the nickel.

It localises to the cytoplasm. Functionally, required for maturation of urease via the functional incorporation of the urease nickel metallocenter. This Staphylococcus saprophyticus subsp. saprophyticus (strain ATCC 15305 / DSM 20229 / NCIMB 8711 / NCTC 7292 / S-41) protein is Urease accessory protein UreF.